A 665-amino-acid chain; its full sequence is Pentatricopeptide repeat-containing protein At1g04840 (665 aa).

PPR repeat units follow at residues 90 to 124 (NPFV…GVKP), 125 to 155 (DRLT…TLKN), 160 to 190 (DSFV…SPDR), 195 to 229 (SILI…NSGS), 230 to 256 (WSTL…MPEK), 257 to 291 (NVVS…GLKP), 292 to 326 (NEYT…GIKL), 327 to 357 (DRAI…MNHK), 358 to 392 (DILS…GEKP), 393 to 423 (DEVV…MRLD), and 429 to 459 (TLKH…MPIN). The interval 464–539 (TWAALYRACK…SLGWSYIELD (76 aa)) is type E motif. Residues 540–570 (GQLNKFSAGDYSHKLTQEIGLKLDEIISLAI) are type E(+) motif. The tract at residues 571–665 (QKGYNPGADW…DGRCSCGDYW (95 aa)) is type DYW motif.

This sequence belongs to the PPR family. PCMP-H subfamily.

The sequence is that of Pentatricopeptide repeat-containing protein At1g04840 (PCMP-H64) from Arabidopsis thaliana (Mouse-ear cress).